The primary structure comprises 447 residues: Tubulin beta-5 chain (447 aa).

Residues Q11, E69, S138, G142, T143, G144, N204, and N226 each coordinate GTP. E69 lines the Mg(2+) pocket.

It belongs to the tubulin family. Dimer of alpha and beta chains. A typical microtubule is a hollow water-filled tube with an outer diameter of 25 nm and an inner diameter of 15 nM. Alpha-beta heterodimers associate head-to-tail to form protofilaments running lengthwise along the microtubule wall with the beta-tubulin subunit facing the microtubule plus end conferring a structural polarity. Microtubules usually have 13 protofilaments but different protofilament numbers can be found in some organisms and specialized cells. Mg(2+) serves as cofactor.

Its subcellular location is the cytoplasm. The protein localises to the cytoskeleton. Functionally, tubulin is the major constituent of microtubules, a cylinder consisting of laterally associated linear protofilaments composed of alpha- and beta-tubulin heterodimers. Microtubules grow by the addition of GTP-tubulin dimers to the microtubule end, where a stabilizing cap forms. Below the cap, tubulin dimers are in GDP-bound state, owing to GTPase activity of alpha-tubulin. The protein is Tubulin beta-5 chain (TUBB5) of Triticum aestivum (Wheat).